The sequence spans 340 residues: UDP-3-O-(3-hydroxymyristoyl)glucosamine N-acyltransferase (340 aa).

The Proton acceptor role is filled by His239.

The protein belongs to the transferase hexapeptide repeat family. LpxD subfamily. Homotrimer.

The enzyme catalyses a UDP-3-O-[(3R)-3-hydroxyacyl]-alpha-D-glucosamine + a (3R)-hydroxyacyl-[ACP] = a UDP-2-N,3-O-bis[(3R)-3-hydroxyacyl]-alpha-D-glucosamine + holo-[ACP] + H(+). It catalyses the reaction UDP-3-O-[(3R)-3-hydroxytetradecanoyl]-alpha-D-glucosamine + (3R)-hydroxytetradecanoyl-[ACP] = UDP-2-N,3-O-bis[(3R)-3-hydroxytetradecanoyl]-alpha-D-glucosamine + holo-[ACP] + H(+). It participates in glycolipid biosynthesis; lipid IV(A) biosynthesis; lipid IV(A) from (3R)-3-hydroxytetradecanoyl-[acyl-carrier-protein] and UDP-N-acetyl-alpha-D-glucosamine: step 3/6. Functionally, catalyzes the N-acylation of UDP-3-O-(hydroxytetradecanoyl)glucosamine using 3-hydroxytetradecanoyl-ACP as the acyl donor. Is involved in the biosynthesis of lipid A, a phosphorylated glycolipid that anchors the lipopolysaccharide to the outer membrane of the cell. This Sodalis glossinidius (strain morsitans) protein is UDP-3-O-(3-hydroxymyristoyl)glucosamine N-acyltransferase.